Here is a 470-residue protein sequence, read N- to C-terminus: Serine/threonine-protein kinase-like protein At1g28390 (470 aa).

Residues 52-333 (FSANNFLGKG…LEVVECLKTV (282 aa)) form the Protein kinase domain. ATP-binding positions include 58–66 (LGKGSHGRV) and lysine 81. Aspartate 186 functions as the Proton acceptor in the catalytic mechanism. Phosphothreonine is present on residues threonine 221 and threonine 226. Residue tyrosine 234 is modified to Phosphotyrosine.

It belongs to the protein kinase superfamily. Ser/Thr protein kinase family.

It carries out the reaction L-seryl-[protein] + ATP = O-phospho-L-seryl-[protein] + ADP + H(+). The enzyme catalyses L-threonyl-[protein] + ATP = O-phospho-L-threonyl-[protein] + ADP + H(+). The protein is Serine/threonine-protein kinase-like protein At1g28390 of Arabidopsis thaliana (Mouse-ear cress).